Reading from the N-terminus, the 424-residue chain is Adenylosuccinate synthetase (424 aa).

Residues 11–17 and 39–41 contribute to the GTP site; these read GDEGKGK and GHT. The active-site Proton acceptor is the D12. Residues D12 and G39 each contribute to the Mg(2+) site. IMP-binding positions include 12–15, 37–40, T127, R141, Q223, T238, and R302; these read DEGK and NAGH. H40 (proton donor) is an active-site residue. Residue 298–304 coordinates substrate; the sequence is TTTGRGR. GTP is bound by residues R304, 330–332, and 412–414; these read KLD and SVG.

This sequence belongs to the adenylosuccinate synthetase family. In terms of assembly, homodimer. Mg(2+) serves as cofactor.

Its subcellular location is the cytoplasm. The catalysed reaction is IMP + L-aspartate + GTP = N(6)-(1,2-dicarboxyethyl)-AMP + GDP + phosphate + 2 H(+). Its pathway is purine metabolism; AMP biosynthesis via de novo pathway; AMP from IMP: step 1/2. Its function is as follows. Plays an important role in the de novo pathway of purine nucleotide biosynthesis. Catalyzes the first committed step in the biosynthesis of AMP from IMP. The sequence is that of Adenylosuccinate synthetase from Methanosarcina barkeri (strain Fusaro / DSM 804).